Consider the following 437-residue polypeptide: Ribosomal protein uS12 methylthiotransferase RimO (437 aa).

In terms of domain architecture, MTTase N-terminal spans 4–114 (PRISFVSLGC…VIEAVHTAIP (111 aa)). [4Fe-4S] cluster contacts are provided by cysteine 13, cysteine 49, cysteine 78, cysteine 145, cysteine 149, and cysteine 152. A Radical SAM core domain is found at 131–369 (LTPRHYAYLK…MAKQQQISTH (239 aa)). One can recognise a TRAM domain in the interval 372 to 437 (KKKIGKRLQV…DAYDLYGIAV (66 aa)).

It belongs to the methylthiotransferase family. RimO subfamily. Requires [4Fe-4S] cluster as cofactor.

It localises to the cytoplasm. It carries out the reaction L-aspartate(89)-[ribosomal protein uS12]-hydrogen + (sulfur carrier)-SH + AH2 + 2 S-adenosyl-L-methionine = 3-methylsulfanyl-L-aspartate(89)-[ribosomal protein uS12]-hydrogen + (sulfur carrier)-H + 5'-deoxyadenosine + L-methionine + A + S-adenosyl-L-homocysteine + 2 H(+). Functionally, catalyzes the methylthiolation of an aspartic acid residue of ribosomal protein uS12. The polypeptide is Ribosomal protein uS12 methylthiotransferase RimO (Bartonella tribocorum (strain CIP 105476 / IBS 506)).